Here is a 428-residue protein sequence, read N- to C-terminus: Something about silencing protein 10 (428 aa).

A disordered region spans residues 1-93 (MDSDGDDYVM…NTMDWGSKRS (93 aa)). 2 stretches are compositionally biased toward acidic residues: residues 15–24 (QEYDDEEREI) and 46–62 (SDDD…EQQD). Ser-152, Ser-323, Ser-324, and Ser-337 each carry phosphoserine. Residues 317–386 (GQQASVSSDD…LRNPRVKHRG (70 aa)) form a disordered region. Over residues 324 to 336 (SDDDDNDDDDDAE) the composition is skewed to acidic residues. A compositionally biased stretch (acidic residues) spans 344–353 (EEAGEEEEEE). The segment covering 370–386 (TPHRKKELRNPRVKHRG) has biased composition (basic residues).

Belongs to the SAS10 family.

The protein localises to the nucleus. Functionally, essential for gene silencing: has a role in the structure of silenced chromatin. May be involved in gene regulation during development. Binds RNA. In Drosophila melanogaster (Fruit fly), this protein is Something about silencing protein 10.